The sequence spans 88 residues: Small ribosomal subunit protein uS15 (88 aa).

It belongs to the universal ribosomal protein uS15 family. As to quaternary structure, part of the 30S ribosomal subunit. Forms a bridge to the 50S subunit in the 70S ribosome, contacting the 23S rRNA.

One of the primary rRNA binding proteins, it binds directly to 16S rRNA where it helps nucleate assembly of the platform of the 30S subunit by binding and bridging several RNA helices of the 16S rRNA. Its function is as follows. Forms an intersubunit bridge (bridge B4) with the 23S rRNA of the 50S subunit in the ribosome. The sequence is that of Small ribosomal subunit protein uS15 from Psychrobacter cryohalolentis (strain ATCC BAA-1226 / DSM 17306 / VKM B-2378 / K5).